Reading from the N-terminus, the 179-residue chain is Large ribosomal subunit protein uL6 (179 aa).

It belongs to the universal ribosomal protein uL6 family. Part of the 50S ribosomal subunit.

This protein binds to the 23S rRNA, and is important in its secondary structure. It is located near the subunit interface in the base of the L7/L12 stalk, and near the tRNA binding site of the peptidyltransferase center. This Chlorobium limicola (strain DSM 245 / NBRC 103803 / 6330) protein is Large ribosomal subunit protein uL6.